A 219-amino-acid polypeptide reads, in one-letter code: Ribose-5-phosphate isomerase A (219 aa).

Residues 28–31, 81–84, and 94–97 each bind substrate; these read TGST, DGAD, and KGGG. The active-site Proton acceptor is Glu-103. Lys-121 contributes to the substrate binding site.

Belongs to the ribose 5-phosphate isomerase family. As to quaternary structure, homodimer.

The enzyme catalyses aldehydo-D-ribose 5-phosphate = D-ribulose 5-phosphate. It functions in the pathway carbohydrate degradation; pentose phosphate pathway; D-ribose 5-phosphate from D-ribulose 5-phosphate (non-oxidative stage): step 1/1. Functionally, catalyzes the reversible conversion of ribose-5-phosphate to ribulose 5-phosphate. The protein is Ribose-5-phosphate isomerase A of Salmonella choleraesuis (strain SC-B67).